We begin with the raw amino-acid sequence, 194 residues long: UPF0215 protein PF2042 (194 aa).

The protein belongs to the UPF0215 family.

In Pyrococcus furiosus (strain ATCC 43587 / DSM 3638 / JCM 8422 / Vc1), this protein is UPF0215 protein PF2042.